An 873-amino-acid chain; its full sequence is Disks large homolog 1 (873 aa).

In terms of domain architecture, L27 spans 4–64 (RQKDAQRALQ…YYEVSLQDTE (61 aa)). The interval 62–135 (DTEDKPIEDS…SPHIPGDARP (74 aa)) is disordered. A compositionally biased stretch (basic and acidic residues) spans 63 to 77 (TEDKPIEDSSLKSRE). A compositionally biased stretch (polar residues) spans 85–96 (WNLSVPPSTTGP). PDZ domains lie at 230–317 (EITL…RRRK) and 325–412 (DVKL…AKPT). Over residues 441-456 (SYLSQPLTPATPSRYS) the composition is skewed to polar residues. The segment at 441–464 (SYLSQPLTPATPSRYSPVSKGMLG) is disordered. Residues 474–555 (KIVLHRGTTG…TVTIIAQYRP (82 aa)) enclose the PDZ 3 domain. Positions 636–662 (NKDSGEQDTSDVDQHVTSNASDSESSF) are disordered. Over residues 650 to 662 (HVTSNASDSESSF) the composition is skewed to polar residues. In terms of domain architecture, Guanylate kinase-like spans 683–858 (SRPVIILGPM…IYNQVKQIIE (176 aa)).

This sequence belongs to the MAGUK family.

The protein resides in the cell membrane. It localises to the endoplasmic reticulum membrane. It is found in the cell junction. The protein localises to the apical cell membrane. Functionally, essential multidomain scaffolding protein required for normal development. Recruits channels, receptors and signaling molecules to discrete plasma membrane domains in polarized cells. Promotes epithelial cell layer barrier function via maintaining cell-cell adhesion. May play a role in adherens junction assembly, signal transduction and cell proliferation. May play a role in synapse assembly and function. The sequence is that of Disks large homolog 1 (dlg1) from Danio rerio (Zebrafish).